Reading from the N-terminus, the 139-residue chain is Transcriptional regulator WhiB5 (139 aa).

A 4Fe-4S Wbl-type domain is found at 4-77 (PCATDPELWF…AGIKLPGGQY (74 aa)). Positions 5, 41, 45, and 53 each coordinate [4Fe-4S] cluster.

This sequence belongs to the WhiB family. The cofactor is [4Fe-4S] cluster. The Fe-S cluster can be nitrosylated by nitric oxide (NO). In terms of processing, upon Fe-S cluster removal intramolecular disulfide bonds are formed.

Its subcellular location is the cytoplasm. A transcription factor that is probably redox-responsive. Probably plays a role in immunomodulation and reactivation after chronic infection. Its induction results in transcription of a number of genes including sigM, and the genes for 2 type VII secretion systems ESX-2 and ESX-4. Seems to negatively regulate its own expression. The apo-form has been shown to act as a protein disulfide reductase. The apo- but not holo-form probably binds DNA. The protein is Transcriptional regulator WhiB5 (whiB5) of Mycobacterium tuberculosis (strain ATCC 25618 / H37Rv).